Here is a 271-residue protein sequence, read N- to C-terminus: NAD kinase (271 aa).

The active-site Proton acceptor is Asp-52. NAD(+) is bound by residues 52–53 (DG), 129–130 (NE), Arg-155, Asp-157, and Ala-192.

The protein belongs to the NAD kinase family. It depends on a divalent metal cation as a cofactor.

The protein resides in the cytoplasm. The catalysed reaction is NAD(+) + ATP = ADP + NADP(+) + H(+). In terms of biological role, involved in the regulation of the intracellular balance of NAD and NADP, and is a key enzyme in the biosynthesis of NADP. Catalyzes specifically the phosphorylation on 2'-hydroxyl of the adenosine moiety of NAD to yield NADP. The chain is NAD kinase from Geobacillus stearothermophilus (Bacillus stearothermophilus).